The following is a 97-amino-acid chain: Large ribosomal subunit protein uL30m (97 aa).

It belongs to the universal ribosomal protein uL30 family. Component of the mitochondrial large ribosomal subunit (mt-LSU). Mature yeast 74S mitochondrial ribosomes consist of a small (37S) and a large (54S) subunit. The 37S small subunit contains a 15S ribosomal RNA (15S mt-rRNA) and at least 32 different proteins. The 54S large subunit contains a 21S rRNA (21S mt-rRNA) and at least 45 different proteins.

It localises to the mitochondrion. Component of the mitochondrial ribosome (mitoribosome), a dedicated translation machinery responsible for the synthesis of mitochondrial genome-encoded proteins, including at least some of the essential transmembrane subunits of the mitochondrial respiratory chain. The mitoribosomes are attached to the mitochondrial inner membrane and translation products are cotranslationally integrated into the membrane. In Schizosaccharomyces pombe (strain 972 / ATCC 24843) (Fission yeast), this protein is Large ribosomal subunit protein uL30m (mrpl33).